A 185-amino-acid chain; its full sequence is Ribosome-recycling factor (185 aa).

This sequence belongs to the RRF family.

The protein resides in the cytoplasm. In terms of biological role, responsible for the release of ribosomes from messenger RNA at the termination of protein biosynthesis. May increase the efficiency of translation by recycling ribosomes from one round of translation to another. In Geotalea daltonii (strain DSM 22248 / JCM 15807 / FRC-32) (Geobacter daltonii), this protein is Ribosome-recycling factor.